A 1634-amino-acid chain; its full sequence is Phosphatidylinositol 4-phosphate 3-kinase C2 domain-containing subunit beta (1634 aa).

Positions 2–298 (SSTQGNGEHW…YASRYGNRKN (297 aa)) are interaction with GRB2. Disordered regions lie at residues 45–188 (EENR…QPSD) and 259–315 (GRGP…VGSR). A compositionally biased stretch (polar residues) spans 87–112 (SDPTLNYNSLSPQEGPPNHSTSQGPQ). Low complexity predominate over residues 176-187 (GSPSSSKISQPS). Positions 259–270 (GRGPLDFSKDTS) are enriched in basic and acidic residues. The region spanning 375–463 (EVNLKVTVLC…DIDIRLQLME (89 aa)) is the PI3K-RBD domain. Positions 635–786 (VYATHRIPII…DSVILQIDFP (152 aa)) constitute a C2 PI3K-type domain. The 177-residue stretch at 805 to 981 (RYEFGSLREE…QYLLAALLCC (177 aa)) folds into the PIK helical domain. Positions 1050–1328 (VPRDCSYFNS…LIESSLGSVA (279 aa)) constitute a PI3K/PI4K catalytic domain. Residues 1056 to 1062 (YFNSNAV) form a G-loop region. Positions 1192-1200 (GICDRHNDN) are catalytic loop. An activation loop region spans residues 1211–1237 (HIDFGRFLGHAQMFGNIKRDRAPFVFT). Residues 1365–1481 (GRISDVFLCR…TFFHPLPRDE (117 aa)) enclose the PX domain. Positions 1504–1624 (VGGEVKLSIS…DLAQEKTGWF (121 aa)) constitute a C2 domain.

Belongs to the PI3/PI4-kinase family. As to quaternary structure, part of a complex with ERBB2 and EGFR. Part of a complex with phosphorylated EGFR and GRB2. Interacts with phosphorylated EGFR and PDGFR, maybe indirectly. Interacts with GRB2. Ca(2+) serves as cofactor. Requires Mg(2+) as cofactor. It depends on Mn(2+) as a cofactor. Expressed in columnar and transitional epithelia, mononuclear cells, and ganglion cells (at protein level). Widely expressed, with highest levels in thymus and placenta and lowest in peripheral blood, skeletal muscle and kidney.

The protein localises to the microsome. It localises to the cell membrane. The protein resides in the cytoplasm. It is found in the cytosol. Its subcellular location is the nucleus. The protein localises to the endoplasmic reticulum. The catalysed reaction is a 1,2-diacyl-sn-glycero-3-phospho-(1D-myo-inositol 4-phosphate) + ATP = a 1,2-diacyl-sn-glycero-3-phospho-(1D-myo-inositol-3,4-bisphosphate) + ADP + H(+). The enzyme catalyses a 1,2-diacyl-sn-glycero-3-phospho-(1D-myo-inositol) + ATP = a 1,2-diacyl-sn-glycero-3-phospho-(1D-myo-inositol-3-phosphate) + ADP + H(+). Its activity is regulated as follows. Activated by GRB2. In terms of biological role, phosphorylates PtdIns and PtdIns4P with a preference for PtdIns. Does not phosphorylate PtdIns(4,5)P2. May be involved in EGF and PDGF signaling cascades. This chain is Phosphatidylinositol 4-phosphate 3-kinase C2 domain-containing subunit beta (PIK3C2B), found in Homo sapiens (Human).